The following is a 126-amino-acid chain: Desulfoferrodoxin (126 aa).

Residues Cys-10, Cys-13, Cys-29, Cys-30, His-49, His-69, His-75, Cys-116, and His-119 each contribute to the Fe cation site.

Belongs to the desulfoferrodoxin family. As to quaternary structure, homodimer. It depends on Fe(3+) as a cofactor. Cu(2+) is required as a cofactor.

The catalysed reaction is reduced [rubredoxin] + superoxide + 2 H(+) = oxidized [rubredoxin] + H2O2. In terms of biological role, catalyzes the one-electron reduction of superoxide anion radical to hydrogen peroxide at a nonheme ferrous iron center. Plays a fundamental role in case of oxidative stress via its superoxide detoxification activity. This Nitratidesulfovibrio vulgaris (strain ATCC 29579 / DSM 644 / CCUG 34227 / NCIMB 8303 / VKM B-1760 / Hildenborough) (Desulfovibrio vulgaris) protein is Desulfoferrodoxin (dfx).